Here is a 174-residue protein sequence, read N- to C-terminus: Non-classical export protein 2 homolog 1 (174 aa).

The Cytoplasmic portion of the chain corresponds to 1–7 (MLSAADN). Residues 8 to 28 (LVRIINAVFLIISIGLISGLI) form a helical membrane-spanning segment. At 29–41 (GTQTKHSSRVNFC) the chain is on the extracellular side. Residues 42–62 (MFAAVYGLVTDSLYGFLANFW) form a helical membrane-spanning segment. The Cytoplasmic portion of the chain corresponds to 63 to 69 (TSLTYPA). Residues 70–90 (ILLVLDFLNFIFTFVAATALA) traverse the membrane as a helical segment. Topologically, residues 91-122 (VGIRCHSCKNKTYLEQNKIIQGSSSRCHQSQA) are extracellular. A helical membrane pass occupies residues 123–143 (AVAFFYFSCFLFLIKVTVATM). The Cytoplasmic portion of the chain corresponds to 144-174 (GMMQNGGFGSNTGFSRRRARRQMGIPTISQV).

It belongs to the NCE102 family.

The protein resides in the cell membrane. Functionally, involved in membrane organization. Required for the formation of membrane compartments of CAN1 (MCCs), localization of CAN1 at the MCCs and subsequent invagination of the plasma membrane at the MCCs sites. Involved in eisosome organization and might act as a sensor of sphingolipids that regulates plasma membrane function. Involved in a novel pathway of export of proteins that lack a cleavable signal sequence. Non-classical export pathway also functions as an alternative clearance/detoxification pathway to eliminate damaged material, when the basic repair pathway is not sufficient. In Saccharomyces cerevisiae (strain ATCC 204508 / S288c) (Baker's yeast), this protein is Non-classical export protein 2 homolog 1 (FHN1).